The chain runs to 483 residues: Isocitrate dehydrogenase [NADP] (483 aa).

Thr-74 lines the NADP(+) pocket. D-threo-isocitrate is bound by residues Ser-83, Asn-85, Arg-89, Arg-99, and Arg-121. Position 232 (Asp-232) interacts with Mg(2+). NADP(+)-binding positions include 264–270 (HGSAPDI) and Asn-277.

This sequence belongs to the isocitrate and isopropylmalate dehydrogenases family. Homodimer. Requires Mg(2+) as cofactor. Mn(2+) is required as a cofactor.

It catalyses the reaction D-threo-isocitrate + NADP(+) = 2-oxoglutarate + CO2 + NADPH. Its function is as follows. Catalyzes the oxidative decarboxylation of isocitrate to 2-oxoglutarate and carbon dioxide with the concomitant reduction of NADP(+). The sequence is that of Isocitrate dehydrogenase [NADP] (icd) from Rickettsia bellii (strain RML369-C).